A 301-amino-acid chain; its full sequence is Glycine--tRNA ligase alpha subunit (301 aa).

It belongs to the class-II aminoacyl-tRNA synthetase family. Tetramer of two alpha and two beta subunits.

The protein localises to the cytoplasm. The catalysed reaction is tRNA(Gly) + glycine + ATP = glycyl-tRNA(Gly) + AMP + diphosphate. The polypeptide is Glycine--tRNA ligase alpha subunit (Shewanella frigidimarina (strain NCIMB 400)).